The following is a 57-amino-acid chain: Large ribosomal subunit protein bL32 (57 aa).

The segment at Met-1–Thr-23 is disordered. Positions Ser-9–Tyr-20 are enriched in basic residues.

Belongs to the bacterial ribosomal protein bL32 family.

The polypeptide is Large ribosomal subunit protein bL32 (Lactococcus lactis subsp. cremoris (strain MG1363)).